The following is a 126-amino-acid chain: Urease subunit beta (126 aa).

It belongs to the urease beta subunit family. Heterotrimer of UreA (gamma), UreB (beta) and UreC (alpha) subunits. Three heterotrimers associate to form the active enzyme.

It localises to the cytoplasm. It carries out the reaction urea + 2 H2O + H(+) = hydrogencarbonate + 2 NH4(+). It functions in the pathway nitrogen metabolism; urea degradation; CO(2) and NH(3) from urea (urease route): step 1/1. This chain is Urease subunit beta, found in Gloeothece citriformis (strain PCC 7424) (Cyanothece sp. (strain PCC 7424)).